The chain runs to 91 residues: uncharacterized protein (91 aa).

An N-terminal signal peptide occupies residues 1 to 20 (MFSRVLALLAVLLLSANTWA).

This sequence belongs to the BhsA/McbA family.

Its subcellular location is the periplasm. This is an uncharacterized protein from Escherichia coli O157:H7.